A 150-amino-acid chain; its full sequence is Phosphopantetheine adenylyltransferase (150 aa).

Ser10 contacts substrate. ATP contacts are provided by residues 10–11 and His18; that span reads SF. Substrate is bound by residues Lys42, Thr74, and Arg88. ATP is bound by residues 89–91, Glu99, and 124–130; these read GLR and LAYISSS.

This sequence belongs to the bacterial CoaD family. As to quaternary structure, homohexamer. Mg(2+) serves as cofactor.

Its subcellular location is the cytoplasm. It catalyses the reaction (R)-4'-phosphopantetheine + ATP + H(+) = 3'-dephospho-CoA + diphosphate. The protein operates within cofactor biosynthesis; coenzyme A biosynthesis; CoA from (R)-pantothenate: step 4/5. Functionally, reversibly transfers an adenylyl group from ATP to 4'-phosphopantetheine, yielding dephospho-CoA (dPCoA) and pyrophosphate. This is Phosphopantetheine adenylyltransferase from Cytophaga hutchinsonii (strain ATCC 33406 / DSM 1761 / CIP 103989 / NBRC 15051 / NCIMB 9469 / D465).